Consider the following 326-residue polypeptide: Vascular endothelial growth factor D (326 aa).

An N-terminal signal peptide occupies residues 1 to 21; it reads MYGEWAAVNILMMSYVYLVQG. A propeptide spanning residues 22–93 is cleaved from the precursor; that stretch reads FSIEHRAVKD…SRSTSHRSTR (72 aa). Intrachain disulfides connect C116/C158, C147/C194, and C151/C196. N-linked (GlcNAc...) asparagine glycosylation is found at N160 and N190. A propeptide spanning residues 211-326 is cleaved from the precursor; it reads SIQIPEEDQC…CRSMVFSLSP (116 aa). The stretch at 227-242 is one 1; approximate repeat; that stretch reads CPVDMLWDNTKCKCVL. A 4 X 16 AA repeats of C-X(10)-C-X-C-X(1,3)-C region spans residues 227–317; the sequence is CPVDMLWDNT…KHKMFHPDTC (91 aa). Repeat copies occupy residues 263 to 278 and 282 to 298. N292 is a glycosylation site (N-linked (GlcNAc...) asparagine). Residues 306–317 form a 4; truncated repeat; sequence CQKHKMFHPDTC.

It belongs to the PDGF/VEGF growth factor family. In terms of assembly, homodimer; non-covalent and antiparallel. In terms of processing, undergoes a complex proteolytic maturation which generates a variety of processed secreted forms with increased activity toward VEGFR-3 and VEGFR-2. VEGF-D first form an antiparallel homodimer linked by disulfide bonds before secretion. The fully processed VEGF-D is composed mostly of two VEGF homology domains (VHDs) bound by non-covalent interactions. As to expression, highly expressed in the spleen, kidney, lung, tongue, ovary and mammary gland.

The protein localises to the secreted. Functionally, growth factor active in angiogenesis, lymphangiogenesis and endothelial cell growth, stimulating their proliferation and migration and also has effects on the permeability of blood vessels. May function in the formation of the venous and lymphatic vascular systems during embryogenesis, and also in the maintenance of differentiated lymphatic endothelium in adults. Binds and activates VEGFR-3 (Flt4) receptor. In Rattus norvegicus (Rat), this protein is Vascular endothelial growth factor D.